The chain runs to 186 residues: Elongation factor P (186 aa).

It belongs to the elongation factor P family.

It localises to the cytoplasm. It participates in protein biosynthesis; polypeptide chain elongation. Involved in peptide bond synthesis. Stimulates efficient translation and peptide-bond synthesis on native or reconstituted 70S ribosomes in vitro. Probably functions indirectly by altering the affinity of the ribosome for aminoacyl-tRNA, thus increasing their reactivity as acceptors for peptidyl transferase. This Thiobacillus denitrificans (strain ATCC 25259 / T1) protein is Elongation factor P.